A 324-amino-acid polypeptide reads, in one-letter code: tRNA N6-adenosine threonylcarbamoyltransferase (324 aa).

Fe cation-binding residues include H107, H111, and Y128. Residues Y128–G132, D160, G173, E177, and N256 each bind substrate. D284 contributes to the Fe cation binding site.

Belongs to the KAE1 / TsaD family. Monomer. Component of the KEOPS complex that consists of Kae1, Bud32, Cgi121 and Pcc1; the whole complex dimerizes. Fe(2+) serves as cofactor.

The protein resides in the cytoplasm. It catalyses the reaction L-threonylcarbamoyladenylate + adenosine(37) in tRNA = N(6)-L-threonylcarbamoyladenosine(37) in tRNA + AMP + H(+). Its function is as follows. Required for the formation of a threonylcarbamoyl group on adenosine at position 37 (t(6)A37) in tRNAs that read codons beginning with adenine. Is a component of the KEOPS complex that is probably involved in the transfer of the threonylcarbamoyl moiety of threonylcarbamoyl-AMP (TC-AMP) to the N6 group of A37. Kae1 likely plays a direct catalytic role in this reaction, but requires other protein(s) of the complex to fulfill this activity. The chain is tRNA N6-adenosine threonylcarbamoyltransferase from Methanothrix thermoacetophila (strain DSM 6194 / JCM 14653 / NBRC 101360 / PT) (Methanosaeta thermophila).